Reading from the N-terminus, the 334-residue chain is Glycerol-1-phosphate dehydrogenase [NAD(P)+] (334 aa).

Residues 77–81 (GRPID) and 99–102 (TTAS) each bind NAD(+). Residue Asp104 participates in substrate binding. Ser108 provides a ligand contact to NAD(+). Substrate is bound at residue Asp147. Positions 147 and 225 each coordinate Zn(2+). A substrate-binding site is contributed by His229. His246 provides a ligand contact to Zn(2+).

This sequence belongs to the glycerol-1-phosphate dehydrogenase family. It depends on Zn(2+) as a cofactor.

The protein localises to the cytoplasm. The catalysed reaction is sn-glycerol 1-phosphate + NAD(+) = dihydroxyacetone phosphate + NADH + H(+). It catalyses the reaction sn-glycerol 1-phosphate + NADP(+) = dihydroxyacetone phosphate + NADPH + H(+). It functions in the pathway membrane lipid metabolism; glycerophospholipid metabolism. Its function is as follows. Catalyzes the NAD(P)H-dependent reduction of dihydroxyacetonephosphate (DHAP or glycerone phosphate) to glycerol 1-phosphate (G1P). The G1P thus generated is used as the glycerophosphate backbone of phospholipids in the cellular membranes of Archaea. This is Glycerol-1-phosphate dehydrogenase [NAD(P)+] from Methanococcus maripaludis (strain DSM 14266 / JCM 13030 / NBRC 101832 / S2 / LL).